The primary structure comprises 746 residues: Protein zyg-11 homolog (746 aa).

LRR repeat units lie at residues 185–209, 216–241, and 265–289; these read LPRLESLDISNTSVSNLTPLLGLRS, MHQLKRLEMTTAQLLAVLSQLEVLQH, and LPQLVSLDVSGRKQVTDAAVKAFVE.

It belongs to the zyg-11 family.

In terms of biological role, serves as substrate adapter subunit in an E3 ubiquitin ligase complex zyg11-cul2-elongin BC. Targets substrates bearing N-terminal glycine degrons for proteasomal degradation. The sequence is that of Protein zyg-11 homolog (zyg11) from Danio rerio (Zebrafish).